The sequence spans 387 residues: Homoserine O-succinyltransferase (387 aa).

Residues 45-354 form the AB hydrolase-1 domain; the sequence is NAVLVCHALN…DAPHGHDAFL (310 aa). Ser151 functions as the Nucleophile in the catalytic mechanism. Arg221 serves as a coordination point for substrate. Catalysis depends on residues Asp317 and His350. Asp351 lines the substrate pocket.

It belongs to the AB hydrolase superfamily. MetX family. In terms of assembly, homodimer.

It localises to the cytoplasm. It carries out the reaction L-homoserine + succinyl-CoA = O-succinyl-L-homoserine + CoA. Its pathway is amino-acid biosynthesis; L-methionine biosynthesis via de novo pathway; O-succinyl-L-homoserine from L-homoserine: step 1/1. Functionally, transfers a succinyl group from succinyl-CoA to L-homoserine, forming succinyl-L-homoserine. The chain is Homoserine O-succinyltransferase from Methylibium petroleiphilum (strain ATCC BAA-1232 / LMG 22953 / PM1).